The chain runs to 229 residues: Serine acetyltransferase (229 aa).

Belongs to the transferase hexapeptide repeat family.

The protein localises to the cytoplasm. It catalyses the reaction L-serine + acetyl-CoA = O-acetyl-L-serine + CoA. It functions in the pathway amino-acid biosynthesis; L-cysteine biosynthesis; L-cysteine from L-serine: step 1/2. Functionally, catalyzes the acetylation of serine by acetyl-CoA to produce O-acetylserine (OAS). The sequence is that of Serine acetyltransferase (cysE) from Mycobacterium tuberculosis (strain ATCC 25618 / H37Rv).